A 1066-amino-acid polypeptide reads, in one-letter code: DNA primase (1066 aa).

The segment at 694–727 (DGPSAGGDDGDGDWFPDAGGPGDEEWEEDTDPMD) is disordered. The segment covering 715–725 (GDEEWEEDTDP) has biased composition (acidic residues). Residues 995–1035 (CLRFKHGRASRATARTFLALSVGTNNRLCASLCQQCFATKC) form a CHC2-type zinc finger.

The protein belongs to the herpesviridae DNA primase family. Associates with the helicase and the primase-associated factor to form the helicase-primase factor.

Its subcellular location is the host nucleus. Its function is as follows. Essential component of the helicase/primase complex. Unwinds the DNA at the replication forks and generates single-stranded DNA for both leading and lagging strand synthesis. The primase initiates primer synthesis and thereby produces large amount of short RNA primers on the lagging strand that the polymerase elongates using dNTPs. This Human herpesvirus 2 (strain HG52) (HHV-2) protein is DNA primase.